A 210-amino-acid polypeptide reads, in one-letter code: Prolactin (210 aa).

The signal sequence occupies residues 1 to 23 (MARRSQGTKLHLAVLCLVVSCHA). Disulfide bonds link C69–C183 and C200–C210.

The protein belongs to the somatotropin/prolactin family. In terms of tissue distribution, pituitary gland.

It localises to the secreted. This chain is Prolactin (prl), found in Coregonus autumnalis (Arctic cisco).